Reading from the N-terminus, the 73-residue chain is Translation initiation factor IF-1 (73 aa).

In terms of domain architecture, S1-like spans 1–73; sequence MAKKDGAIEV…SRGRIVYRYK (73 aa).

This sequence belongs to the IF-1 family. As to quaternary structure, component of the 30S ribosomal translation pre-initiation complex which assembles on the 30S ribosome in the order IF-2 and IF-3, IF-1 and N-formylmethionyl-tRNA(fMet); mRNA recruitment can occur at any time during PIC assembly.

Its subcellular location is the cytoplasm. One of the essential components for the initiation of protein synthesis. Stabilizes the binding of IF-2 and IF-3 on the 30S subunit to which N-formylmethionyl-tRNA(fMet) subsequently binds. Helps modulate mRNA selection, yielding the 30S pre-initiation complex (PIC). Upon addition of the 50S ribosomal subunit IF-1, IF-2 and IF-3 are released leaving the mature 70S translation initiation complex. The polypeptide is Translation initiation factor IF-1 (Mycobacterium avium (strain 104)).